A 363-amino-acid polypeptide reads, in one-letter code: MNELLLNLVDPLHQWFLGLGDGGAVLWSVLKILLIAVPVIVTVAFYVVWERKLIGWMHVRHGPMYVGMGIFQAFADVFKLLFKEIVQPASSHKAMFVIAPLLTLAPAFAAWSVVPFDAKLVLSNANVGLLYLLAMTSLGVYGIILAGWASNSKYAFLGAMRSAAQVVSYEIAMGFALVGVMIASGSVNLSQIVFAQAGNSGFFDWFLIPLFPLFIVYWVSGVAETNRAPFDVVEGESEIVAGHMVEYSGGAFALFFLAEYANMILVSFLISIFFLGGWLSPIQGWVNADISPWIDWLWKGGWPWLLMKVFFFASAYIWFRASFPRYRYDQIMRLGWKVFIPLTIVWIAVTALMVFYGVIQKGV.

A run of 9 helical transmembrane segments spans residues 62 to 82 (GPMY…KLLF), 96 to 116 (FVIA…VVPF), 127 to 147 (VGLL…ILAG), 163 to 183 (AAQV…VMIA), 202 to 222 (FFDW…VSGV), 238 to 257 (EIVA…LFFL), 264 to 286 (ILVS…QGWV), 299 to 319 (KGGW…YIWF), and 339 to 359 (FIPL…YGVI).

Belongs to the complex I subunit 1 family. As to quaternary structure, NDH-1 is composed of 14 different subunits. Subunits NuoA, H, J, K, L, M, N constitute the membrane sector of the complex.

The protein localises to the cell inner membrane. It carries out the reaction a quinone + NADH + 5 H(+)(in) = a quinol + NAD(+) + 4 H(+)(out). In terms of biological role, NDH-1 shuttles electrons from NADH, via FMN and iron-sulfur (Fe-S) centers, to quinones in the respiratory chain. The immediate electron acceptor for the enzyme in this species is believed to be ubiquinone. Couples the redox reaction to proton translocation (for every two electrons transferred, four hydrogen ions are translocated across the cytoplasmic membrane), and thus conserves the redox energy in a proton gradient. This subunit may bind ubiquinone. In Xanthomonas axonopodis pv. citri (strain 306), this protein is NADH-quinone oxidoreductase subunit H.